The chain runs to 171 residues: Transcriptional repressor NrdR (171 aa).

A zinc finger lies at 3–34; sequence CPFCGDPNTQVADTRENEGGEVVRRRRRCPKC. The ATP-cone domain occupies 49–139; sequence PHIVKRNGNR…VYRNFADVDE (91 aa). The interval 148–171 is disordered; sequence KARPKRNRPAEPPEPTSENDLFRS.

It belongs to the NrdR family. Zn(2+) is required as a cofactor.

Its function is as follows. Negatively regulates transcription of bacterial ribonucleotide reductase nrd genes and operons by binding to NrdR-boxes. In Aromatoleum aromaticum (strain DSM 19018 / LMG 30748 / EbN1) (Azoarcus sp. (strain EbN1)), this protein is Transcriptional repressor NrdR.